A 274-amino-acid chain; its full sequence is NAD-dependent protein deacylase (274 aa).

The region spanning Cys4 to Pro274 is the Deacetylase sirtuin-type domain. Gly29–Trp48 is an NAD(+) binding site. Substrate is bound by residues Tyr73 and Arg76. Gln111–Asp114 contacts NAD(+). His129 serves as the catalytic Proton acceptor. Positions 137, 140, 178, and 183 each coordinate Zn(2+). Residues Gly220 to Ser222, Asn246 to Glu248, and Cys264 each bind NAD(+).

Belongs to the sirtuin family. Class III subfamily. Zn(2+) is required as a cofactor.

It localises to the mitochondrion. The enzyme catalyses N(6)-malonyl-L-lysyl-[protein] + NAD(+) + H2O = 2''-O-malonyl-ADP-D-ribose + nicotinamide + L-lysyl-[protein]. It catalyses the reaction N(6)-succinyl-L-lysyl-[protein] + NAD(+) + H2O = 2''-O-succinyl-ADP-D-ribose + nicotinamide + L-lysyl-[protein]. It carries out the reaction N(6)-glutaryl-L-lysyl-[protein] + NAD(+) + H2O = 2''-O-glutaryl-ADP-D-ribose + nicotinamide + L-lysyl-[protein]. Its function is as follows. NAD-dependent lysine demalonylase, desuccinylase and deglutarylase that specifically removes malonyl, succinyl and glutaryl groups on target proteins. Has weak NAD-dependent protein deacetylase activity; however this activity may not be physiologically relevant in vivo. This Daphnia pulex (Water flea) protein is NAD-dependent protein deacylase.